A 272-amino-acid chain; its full sequence is HMP-PP phosphatase (272 aa).

Catalysis depends on aspartate 8, which acts as the Nucleophile. The Mg(2+) site is built by aspartate 8, aspartate 10, and aspartate 212.

It belongs to the HAD-like hydrolase superfamily. Cof family. Mg(2+) is required as a cofactor.

It carries out the reaction 4-amino-2-methyl-5-(diphosphooxymethyl)pyrimidine + H2O = 4-amino-2-methyl-5-(phosphooxymethyl)pyrimidine + phosphate + H(+). Its function is as follows. Catalyzes the hydrolysis of 4-amino-2-methyl-5-hydroxymethylpyrimidine pyrophosphate (HMP-PP) to 4-amino-2-methyl-5-hydroxymethylpyrimidine phosphate (HMP-P). In Escherichia fergusonii (strain ATCC 35469 / DSM 13698 / CCUG 18766 / IAM 14443 / JCM 21226 / LMG 7866 / NBRC 102419 / NCTC 12128 / CDC 0568-73), this protein is HMP-PP phosphatase.